The following is a 318-amino-acid chain: NADH-ubiquinone oxidoreductase chain 1 (318 aa).

8 consecutive transmembrane segments (helical) span residues 5-25 (IISS…LTLI), 69-89 (SIFL…ILWI), 102-122 (LGLM…LTSG), 148-168 (LGLM…KLFI), 174-194 (IWLL…TLAE), 215-235 (VEFS…NILF), 253-273 (LYFS…FLWV), and 293-313 (FLPI…FFGV).

Belongs to the complex I subunit 1 family.

It is found in the mitochondrion inner membrane. The enzyme catalyses a ubiquinone + NADH + 5 H(+)(in) = a ubiquinol + NAD(+) + 4 H(+)(out). Core subunit of the mitochondrial membrane respiratory chain NADH dehydrogenase (Complex I) that is believed to belong to the minimal assembly required for catalysis. Complex I functions in the transfer of electrons from NADH to the respiratory chain. The immediate electron acceptor for the enzyme is believed to be ubiquinone. This is NADH-ubiquinone oxidoreductase chain 1 (MT-ND1) from Myxine glutinosa (Atlantic hagfish).